The primary structure comprises 404 residues: MTIIQTVTELGVTEDTIKVQMAPSGGKHLLADPGNHPAEHFESQMSWLRFQTRQYLTRFTDNQSDFVHSLQKKHRTPFRDVYFKYTSLMGSHMFYVIVLPMPVWLGYRDLTRDMIYVLGYSIYLSGYLKDYWCLPRPKSPPVDRITLSEYTTKEYGAPSSHSANATAVSLLFFWRICLSDTLVWPTKLLLLSLVIFYYLTLVFGRVYCGMHGMLDLFSGAAVGAICFFIRIWVVHALRNFQIGEHLWFPLLSVAWGLFILFNHVRPIDECPCFEDSVAFIGVVSGLDCSDWLTERYGWNLVCSRYASCGSKVFLRPLVGVASVIVWKDVISKTAVYTLLIKLLRFHDDRSEKVHFHNETSEEEECLLYSGVSKVEIVGRFLIYAGIPTTVFLLCPVFFTWTNLR.

The Lumenal portion of the chain corresponds to 1 to 86 (MTIIQTVTEL…PFRDVYFKYT (86 aa)). N-linked (GlcNAc...) asparagine glycosylation is present at Asn-62. The helical transmembrane segment at 87-107 (SLMGSHMFYVIVLPMPVWLGY) threads the bilayer. Residues 108-113 (RDLTRD) lie on the Cytoplasmic side of the membrane. Residues 114 to 134 (MIYVLGYSIYLSGYLKDYWCL) traverse the membrane as a helical segment. Residues 129–137 (KDYWCLPRP) form a phosphatase sequence motif I region. Topologically, residues 135–154 (PRPKSPPVDRITLSEYTTKE) are lumenal. The chain crosses the membrane as a helical span at residues 155–176 (YGAPSSHSANATAVSLLFFWRI). The segment at 158–161 (PSSH) is phosphatase sequence motif II. His-161 (proton donor) is an active-site residue. Residues 177-182 (CLSDTL) lie on the Cytoplasmic side of the membrane. A helical membrane pass occupies residues 183-203 (VWPTKLLLLSLVIFYYLTLVF). Over 204–215 (GRVYCGMHGMLD) the chain is Lumenal. Residues 204–215 (GRVYCGMHGMLD) form a phosphatase sequence motif III region. The active-site Nucleophile is His-211. A helical transmembrane segment spans residues 216-236 (LFSGAAVGAICFFIRIWVVHA). The Cytoplasmic portion of the chain corresponds to 237-241 (LRNFQ). A helical transmembrane segment spans residues 242 to 262 (IGEHLWFPLLSVAWGLFILFN). The Lumenal portion of the chain corresponds to 263-319 (HVRPIDECPCFEDSVAFIGVVSGLDCSDWLTERYGWNLVCSRYASCGSKVFLRPLVG). The helical transmembrane segment at 320-340 (VASVIVWKDVISKTAVYTLLI) threads the bilayer. Residues 341 to 379 (KLLRFHDDRSEKVHFHNETSEEEECLLYSGVSKVEIVGR) lie on the Cytoplasmic side of the membrane. Residues 380–400 (FLIYAGIPTTVFLLCPVFFTW) traverse the membrane as a helical segment. Residues 401-404 (TNLR) are Lumenal-facing.

The protein belongs to the type 2 lipid phosphate phosphatase family.

Its subcellular location is the endoplasmic reticulum membrane. It carries out the reaction sphinganine 1-phosphate + H2O = sphinganine + phosphate. In terms of biological role, dihydrosphingosine 1-phosphate phosphatase required for efficient ceramide synthesis from exogenous sphingoid bases. Involved in endocytosis and calcium-mediated signaling. The chain is Dihydrosphingosine 1-phosphate phosphatase YSR3 from Saccharomyces cerevisiae (strain ATCC 204508 / S288c) (Baker's yeast).